The following is a 49-amino-acid chain: Large ribosomal subunit protein bL33 (49 aa).

The protein belongs to the bacterial ribosomal protein bL33 family.

This chain is Large ribosomal subunit protein bL33, found in Clostridium botulinum (strain Alaska E43 / Type E3).